Consider the following 84-residue polypeptide: Coiled-coil-helix-coiled-coil-helix domain-containing protein 7 (84 aa).

A CHCH domain is found at 12–54 (SNPCLEETDASTKCMDENQYQKDLCTSYFIKYKNCRKFWNGIM). 2 consecutive short sequence motifs (cx9C motif) follow at residues 15–25 (CLEETDASTKC) and 36–46 (CTSYFIKYKNC). 2 cysteine pairs are disulfide-bonded: C15/C46 and C25/C36.

Belongs to the CHCHD7 family.

The protein localises to the mitochondrion intermembrane space. The chain is Coiled-coil-helix-coiled-coil-helix domain-containing protein 7 (chchd7) from Xenopus laevis (African clawed frog).